Here is a 427-residue protein sequence, read N- to C-terminus: Peptidase B (427 aa).

Residues Lys195 and Asp200 each coordinate Mn(2+). Lys207 is a catalytic residue. Mn(2+) contacts are provided by Asp218, Asp277, and Glu279. Residue Arg281 is part of the active site.

This sequence belongs to the peptidase M17 family. Homohexamer. Requires Mn(2+) as cofactor.

The protein localises to the cytoplasm. The enzyme catalyses Release of an N-terminal amino acid, Xaa, from a peptide or arylamide. Xaa is preferably Glu or Asp but may be other amino acids, including Leu, Met, His, Cys and Gln.. Probably plays an important role in intracellular peptide degradation. The protein is Peptidase B of Escherichia coli (strain K12 / MC4100 / BW2952).